The chain runs to 498 residues: Putative antiporter subunit mnhD2 (498 aa).

Transmembrane regions (helical) follow at residues 2–22 (LSNL…ILVF), 32–52 (YLYL…LIYV), 78–98 (LSLI…AYGF), 108–128 (YHLP…FLTS), 130–150 (LFNL…LITL), 161–181 (IIYV…IGLL), 209–229 (ISLI…FMWL), 240–260 (LAAL…IRFF), 271–291 (IHPL…IGVI), 308–328 (IGFI…GAIF), 330–350 (LVND…LVYI), 369–389 (FGVA…FSGF), 403–423 (GNYI…YSLF), and 451–471 (ILSI…VVLN).

Belongs to the CPA3 antiporters (TC 2.A.63) subunit D family. In terms of assembly, may form a heterooligomeric complex that consists of seven subunits: mnhA2, mnhB2, mnhC2, mnhD2, mnhE2, mnhF2 and mnhG2.

The protein resides in the cell membrane. This is Putative antiporter subunit mnhD2 (mnhD2) from Staphylococcus aureus (strain JH1).